The primary structure comprises 309 residues: DnaJ homolog subfamily B member 7 (309 aa).

The region spanning 3–69 (DYYEVLGLQR…EKRDIYDKYG (67 aa)) is the J domain. A disordered region spans residues 282-309 (FSAGVKEGGKRKKKKRKEVQKKSTKRNC). Residues 290–309 (GKRKKKKRKEVQKKSTKRNC) are compositionally biased toward basic residues.

In terms of biological role, probably acts as a co-chaperone. This Homo sapiens (Human) protein is DnaJ homolog subfamily B member 7 (DNAJB7).